The chain runs to 84 residues: Small ribosomal subunit protein uS17 (84 aa).

It belongs to the universal ribosomal protein uS17 family. As to quaternary structure, part of the 30S ribosomal subunit.

One of the primary rRNA binding proteins, it binds specifically to the 5'-end of 16S ribosomal RNA. The protein is Small ribosomal subunit protein uS17 of Ureaplasma parvum serovar 3 (strain ATCC 27815 / 27 / NCTC 11736).